Consider the following 413-residue polypeptide: L-methionine gamma-lyase (413 aa).

Pyridoxal 5'-phosphate is bound by residues 75-77 (YGR) and 105-106 (GM). Residue Tyr-131 coordinates substrate. 218–220 (SAT) serves as a coordination point for pyridoxal 5'-phosphate. Lys-221 carries the N6-(pyridoxal phosphate)lysine modification. Substrate is bound at residue Arg-365. The segment at 388–413 (RLPETAGAGREPSRTALRLPERAADR) is disordered.

Belongs to the trans-sulfuration enzymes family. As to quaternary structure, homotetramer; dimer of active dimers. Pyridoxal 5'-phosphate serves as cofactor.

It carries out the reaction L-methionine + H2O = methanethiol + 2-oxobutanoate + NH4(+). The catalysed reaction is L-homocysteine + H2O = 2-oxobutanoate + hydrogen sulfide + NH4(+) + H(+). The enzyme catalyses L-cysteine + H2O = hydrogen sulfide + pyruvate + NH4(+) + H(+). Its function is as follows. Catalyzes the alpha,gamma-elimination of L-methionine to produce methanethiol, 2-oxobutanoate and ammonia. Is probably involved in L-methionine catabolism. Is also able to catalyze the alpha,gamma-elimination of L-homocysteine, and, to a lesser extent, the alpha,beta-elimination of L-cysteine. The polypeptide is L-methionine gamma-lyase (Streptomyces avermitilis (strain ATCC 31267 / DSM 46492 / JCM 5070 / NBRC 14893 / NCIMB 12804 / NRRL 8165 / MA-4680)).